A 403-amino-acid chain; its full sequence is Phosphoglycerate kinase (403 aa).

Substrate-binding positions include 24 to 26, R39, 62 to 65, R121, and R161; these read DLN and HLGR. ATP contacts are provided by residues K211, G299, E330, and 359–362; that span reads GGDS.

It belongs to the phosphoglycerate kinase family. In terms of assembly, monomer.

The protein resides in the cytoplasm. It carries out the reaction (2R)-3-phosphoglycerate + ATP = (2R)-3-phospho-glyceroyl phosphate + ADP. It participates in carbohydrate degradation; glycolysis; pyruvate from D-glyceraldehyde 3-phosphate: step 2/5. This Rhodococcus jostii (strain RHA1) protein is Phosphoglycerate kinase.